Consider the following 159-residue polypeptide: Transcriptional repressor NrdR (159 aa).

Residues 1–11 (MQCPTCQNTDS) show a composition bias toward polar residues. Residues 1–21 (MQCPTCQNTDSRVLESRSADS) form a disordered region. A zinc finger spans residues 3-34 (CPTCQNTDSRVLESRSADSGKSVRRRRECLNC). The ATP-cone domain occupies 49 to 139 (VSVLKKDGSR…VYRKFNGVKD (91 aa)).

This sequence belongs to the NrdR family. It depends on Zn(2+) as a cofactor.

Functionally, negatively regulates transcription of bacterial ribonucleotide reductase nrd genes and operons by binding to NrdR-boxes. The sequence is that of Transcriptional repressor NrdR from Prochlorococcus marinus (strain MIT 9301).